A 152-amino-acid chain; its full sequence is Nucleoside diphosphate kinase A (152 aa).

K12, F60, R88, and T94 together coordinate ATP. K100 is covalently cross-linked (Glycyl lysine isopeptide (Lys-Gly) (interchain with G-Cter in ubiquitin)). ATP is bound by residues R105 and N115. The Pros-phosphohistidine intermediate role is filled by H118. S120, S122, and S125 each carry phosphoserine.

Belongs to the NDK family. Hexamer of two different chains: An and B (A6, A5B, A4B2, A3B3, A2B4, AB5, B6). Interacts with PRUNE1. Component of the SET complex, composed of at least ANP32A, APEX1, HMGB2, NME1, SET and TREX1. Within this complex, interacts directly with SET. Also interacts with TREX1, but only following translocation to the nucleus. Mg(2+) is required as a cofactor. Isoform 1 is expressed in heart, brain, placenta, lung, liver, skeletal muscle, pancreas, spleen and thymus. Expressed in lung carcinoma cell lines but not in normal lung tissues. Isoform 2 is ubiquitously expressed and its expression is also related to tumor differentiation.

It localises to the cytoplasm. Its subcellular location is the nucleus. It catalyses the reaction a 2'-deoxyribonucleoside 5'-diphosphate + ATP = a 2'-deoxyribonucleoside 5'-triphosphate + ADP. The enzyme catalyses a ribonucleoside 5'-diphosphate + ATP = a ribonucleoside 5'-triphosphate + ADP. Autophosphorylation at His-118 increases serine/threonine protein kinase activity of the enzyme. Interaction with the SET complex inhibits the endonuclease activity. Major role in the synthesis of nucleoside triphosphates other than ATP. The ATP gamma phosphate is transferred to the NDP beta phosphate via a ping-pong mechanism, using a phosphorylated active-site intermediate. Possesses nucleoside-diphosphate kinase, serine/threonine-specific protein kinase, geranyl and farnesyl pyrophosphate kinase, histidine protein kinase and 3'-5' exonuclease activities. Involved in cell proliferation, differentiation and development, signal transduction, G protein-coupled receptor endocytosis, and gene expression. Required for neural development including neural patterning and cell fate determination. During GZMA-mediated cell death, works in concert with TREX1. NME1 nicks one strand of DNA and TREX1 removes bases from the free 3' end to enhance DNA damage and prevent DNA end reannealing and rapid repair. The protein is Nucleoside diphosphate kinase A (NME1) of Homo sapiens (Human).